The primary structure comprises 342 residues: L-threonine 3-dehydrogenase (342 aa).

C38 is a Zn(2+) binding site. Residues T40 and H43 each act as charge relay system in the active site. Zn(2+) contacts are provided by H63, E64, C93, C96, C99, and C107. NAD(+) contacts are provided by residues I175, D195, R200, 262–264 (LGI), and 286–287 (IY).

It belongs to the zinc-containing alcohol dehydrogenase family. In terms of assembly, homotetramer. Zn(2+) serves as cofactor.

Its subcellular location is the cytoplasm. The catalysed reaction is L-threonine + NAD(+) = (2S)-2-amino-3-oxobutanoate + NADH + H(+). Its pathway is amino-acid degradation; L-threonine degradation via oxydo-reductase pathway; glycine from L-threonine: step 1/2. Catalyzes the NAD(+)-dependent oxidation of L-threonine to 2-amino-3-ketobutyrate. The chain is L-threonine 3-dehydrogenase from Paraburkholderia phymatum (strain DSM 17167 / CIP 108236 / LMG 21445 / STM815) (Burkholderia phymatum).